The chain runs to 599 residues: RING finger protein unkempt (599 aa).

5 consecutive C3H1-type zinc fingers follow at residues tyrosine 71–alanine 100, tyrosine 111–glutamine 141, asparagine 194–lysine 220, lysine 230–threonine 264, and isoleucine 272–proline 300. Serine 411 bears the Phosphoserine mark. The RING-type zinc finger occupies cysteine 556–glutamine 591.

Belongs to the unkempt family. In terms of tissue distribution, ubiquitous in most somatic tissues from syncytial embryo through to embryo stage 15. Expression becomes restricted predominantly to the CNS at stages 16 and 17.

The protein localises to the cytoplasm. Its function is as follows. Essential for late larval/early pupal development. The polypeptide is RING finger protein unkempt (unk) (Drosophila melanogaster (Fruit fly)).